The sequence spans 409 residues: Tyrosine--tRNA ligase (409 aa).

Tyr35 provides a ligand contact to L-tyrosine. A 'HIGH' region motif is present at residues 40 to 49 (CTAESLHVGS). L-tyrosine contacts are provided by Tyr172 and Gln176. Positions 232–236 (KMGKT) match the 'KMSKS' region motif. Lys235 contacts ATP. The 67-residue stretch at 343–409 (ISILDLVILS…KKKHIKVELI (67 aa)) folds into the S4 RNA-binding domain.

The protein belongs to the class-I aminoacyl-tRNA synthetase family. TyrS type 1 subfamily. As to quaternary structure, homodimer.

It localises to the cytoplasm. It catalyses the reaction tRNA(Tyr) + L-tyrosine + ATP = L-tyrosyl-tRNA(Tyr) + AMP + diphosphate + H(+). Catalyzes the attachment of tyrosine to tRNA(Tyr) in a two-step reaction: tyrosine is first activated by ATP to form Tyr-AMP and then transferred to the acceptor end of tRNA(Tyr). In Pelagibacter ubique (strain HTCC1062), this protein is Tyrosine--tRNA ligase.